The chain runs to 355 residues: UDP-N-acetylglucosamine--N-acetylmuramyl-(pentapeptide) pyrophosphoryl-undecaprenol N-acetylglucosamine transferase (355 aa).

UDP-N-acetyl-alpha-D-glucosamine-binding positions include 15-17 (TGG), Asn-127, Arg-163, Ser-191, Ile-244, 263-268 (ALTVSE), and Gln-288.

It belongs to the glycosyltransferase 28 family. MurG subfamily.

It is found in the cell inner membrane. It catalyses the reaction di-trans,octa-cis-undecaprenyl diphospho-N-acetyl-alpha-D-muramoyl-L-alanyl-D-glutamyl-meso-2,6-diaminopimeloyl-D-alanyl-D-alanine + UDP-N-acetyl-alpha-D-glucosamine = di-trans,octa-cis-undecaprenyl diphospho-[N-acetyl-alpha-D-glucosaminyl-(1-&gt;4)]-N-acetyl-alpha-D-muramoyl-L-alanyl-D-glutamyl-meso-2,6-diaminopimeloyl-D-alanyl-D-alanine + UDP + H(+). Its pathway is cell wall biogenesis; peptidoglycan biosynthesis. Cell wall formation. Catalyzes the transfer of a GlcNAc subunit on undecaprenyl-pyrophosphoryl-MurNAc-pentapeptide (lipid intermediate I) to form undecaprenyl-pyrophosphoryl-MurNAc-(pentapeptide)GlcNAc (lipid intermediate II). This is UDP-N-acetylglucosamine--N-acetylmuramyl-(pentapeptide) pyrophosphoryl-undecaprenol N-acetylglucosamine transferase from Shigella boydii serotype 18 (strain CDC 3083-94 / BS512).